The sequence spans 212 residues: uncharacterized protein (212 aa).

Residues 1 to 88 (MAEEQKIALE…PAPAKPASAS (88 aa)) form a disordered region. Position 13 is a phosphoserine (serine 13). Over residues 23–41 (ADTPAPAPAEIPAPAPAPT) the composition is skewed to pro residues. The segment covering 45–54 (VTKDVAEEKI) has biased composition (basic and acidic residues).

The protein belongs to the remorin family.

Its subcellular location is the cell membrane. This is an uncharacterized protein from Arabidopsis thaliana (Mouse-ear cress).